Reading from the N-terminus, the 593-residue chain is Probable tripeptidyl-peptidase SED3 (593 aa).

A signal peptide spans 1–18 (MLLRWHSVIPLFLAMTVA). Residues 19–198 (FPNTYRTVVE…NLQAIYLSTN (180 aa)) constitute a propeptide, removed in mature form. 3 N-linked (GlcNAc...) asparagine glycosylation sites follow: asparagine 204, asparagine 261, and asparagine 275. Residues 206–592 (TITPRCLREL…RILAKIVQHM (387 aa)) form the Peptidase S53 domain. Active-site charge relay system residues include glutamate 282 and aspartate 286. A glycan (N-linked (GlcNAc...) asparagine) is linked at asparagine 295. Serine 496 (charge relay system) is an active-site residue. Residues aspartate 538 and isoleucine 539 each contribute to the Ca(2+) site. Residues asparagine 554 and asparagine 566 are each glycosylated (N-linked (GlcNAc...) asparagine). Glycine 570 and aspartate 572 together coordinate Ca(2+).

The cofactor is Ca(2+).

Its subcellular location is the secreted. The protein localises to the extracellular space. It catalyses the reaction Release of an N-terminal tripeptide from a polypeptide.. In terms of biological role, secreted tripeptidyl-peptidase which degrades proteins at acidic pHs and is involved in virulence. In Arthroderma benhamiae (strain ATCC MYA-4681 / CBS 112371) (Trichophyton mentagrophytes), this protein is Probable tripeptidyl-peptidase SED3 (SED3).